We begin with the raw amino-acid sequence, 138 residues long: Large ribosomal subunit protein uL16 (138 aa).

The protein belongs to the universal ribosomal protein uL16 family. As to quaternary structure, part of the 50S ribosomal subunit.

In terms of biological role, binds 23S rRNA and is also seen to make contacts with the A and possibly P site tRNAs. The polypeptide is Large ribosomal subunit protein uL16 (Rubrobacter xylanophilus (strain DSM 9941 / JCM 11954 / NBRC 16129 / PRD-1)).